The chain runs to 259 residues: Probable WRKY transcription factor 65 (259 aa).

Positions 1–17 are enriched in basic and acidic residues; the sequence is MKRGLDMARSYNDHESS. Disordered stretches follow at residues 1 to 101 and 126 to 165; these read MKRG…RCSS and TSEH…EEED. Polar residues predominate over residues 18–31; that stretch reads QETGPESPNSSTFN. The span at 47 to 69 shows a compositional bias: basic and acidic residues; that stretch reads RSVEKRVVNVPMKEMEGSRHKGD. Residues 68–134 constitute a DNA-binding region (WRKY); the sequence is GDTTPPSDSW…YTSEHNHPWP (67 aa). The span at 154–165 shows a compositional bias: acidic residues; sequence EPEVEPEAEEED.

It localises to the nucleus. Transcription factor. Interacts specifically with the W box (5'-(T)TGAC[CT]-3'), a frequently occurring elicitor-responsive cis-acting element. The chain is Probable WRKY transcription factor 65 (WRKY65) from Arabidopsis thaliana (Mouse-ear cress).